The primary structure comprises 71 residues: Small ribosomal subunit protein bS21 (71 aa).

This sequence belongs to the bacterial ribosomal protein bS21 family.

The polypeptide is Small ribosomal subunit protein bS21 (Shewanella piezotolerans (strain WP3 / JCM 13877)).